A 108-amino-acid chain; its full sequence is ATP-dependent Clp protease adapter protein ClpS (108 aa).

Belongs to the ClpS family. As to quaternary structure, binds to the N-terminal domain of the chaperone ClpA.

Its function is as follows. Involved in the modulation of the specificity of the ClpAP-mediated ATP-dependent protein degradation. The chain is ATP-dependent Clp protease adapter protein ClpS from Ralstonia nicotianae (strain ATCC BAA-1114 / GMI1000) (Ralstonia solanacearum).